Reading from the N-terminus, the 34-residue chain is Omega/M-ectatotoxin-Et1a subunit B (34 aa).

Cysteine 10 and cysteine 32 are disulfide-bonded.

The protein belongs to the ectatomin family. Ectatomin-Et subfamily. As to quaternary structure, heterodimer of an A and a B chain; disulfide-linked. As to expression, expressed by the venom gland.

Its subcellular location is the secreted. It is found in the target cell membrane. Functionally, algogenic for animals, human and insects. At high concentrations (0.5-1 uM), it acts as a pore-forming protein that forms nonselective cation channels both in cell and artificial membranes. It is weakly selective for cation over anions channel conductance is identical in both directions. At lower concentrations (1-10 nM), this heterodimer inhibits cardiac L-type calcium currents in isolated rat cardiac ventricular myocytes. The polypeptide is Omega/M-ectatotoxin-Et1a subunit B (Ectatomma tuberculatum (Selva ant)).